The following is a 576-amino-acid chain: Arginine--tRNA ligase (576 aa).

The 'HIGH' region motif lies at 132-142 (ANPTGPMHIGH).

It belongs to the class-I aminoacyl-tRNA synthetase family. In terms of assembly, monomer.

It is found in the cytoplasm. It carries out the reaction tRNA(Arg) + L-arginine + ATP = L-arginyl-tRNA(Arg) + AMP + diphosphate. The chain is Arginine--tRNA ligase from Ehrlichia ruminantium (strain Welgevonden).